The chain runs to 416 residues: Ribulose bisphosphate carboxylase large chain (416 aa).

Residues asparagine 100 and threonine 150 each contribute to the substrate site. Lysine 152 serves as the catalytic Proton acceptor. Lysine 154 contributes to the substrate binding site. Residues lysine 178, aspartate 180, and glutamate 181 each contribute to the Mg(2+) site. Lysine 178 carries the post-translational modification N6-carboxylysine. Histidine 271 acts as the Proton acceptor in catalysis. Positions 272, 304, and 356 each coordinate substrate.

The protein belongs to the RuBisCO large chain family. Type I subfamily. Heterohexadecamer of 8 large chains and 8 small chains; disulfide-linked. The disulfide link is formed within the large subunit homodimers. The cofactor is Mg(2+). In terms of processing, the disulfide bond which can form in the large chain dimeric partners within the hexadecamer appears to be associated with oxidative stress and protein turnover.

It is found in the plastid. The protein localises to the chloroplast. It catalyses the reaction 2 (2R)-3-phosphoglycerate + 2 H(+) = D-ribulose 1,5-bisphosphate + CO2 + H2O. It carries out the reaction D-ribulose 1,5-bisphosphate + O2 = 2-phosphoglycolate + (2R)-3-phosphoglycerate + 2 H(+). RuBisCO catalyzes two reactions: the carboxylation of D-ribulose 1,5-bisphosphate, the primary event in carbon dioxide fixation, as well as the oxidative fragmentation of the pentose substrate in the photorespiration process. Both reactions occur simultaneously and in competition at the same active site. This is Ribulose bisphosphate carboxylase large chain (rbcL) from Cheiropleuria bicuspis (Fern).